A 308-amino-acid polypeptide reads, in one-letter code: Cytochrome c biogenesis protein CcsA (308 aa).

A run of 7 helical transmembrane segments spans residues 2–22 (IVSTLEHILTHISFSIVSILI), 44–64 (GMLVTFFCITGLLATHWIYLG), 71–91 (LSESLIFLSWSFALIHSIAYF), 143–163 (MILGYAALLCGSLLSVALMVI), 212–232 (VIGLGFIFLTIGILSGAVWAN), 239–259 (WSWDPKETWAFITWIVFAIYL), and 273–293 (AIVASIGFLIIWICYFGVNLV).

This sequence belongs to the CcmF/CycK/Ccl1/NrfE/CcsA family. As to quaternary structure, may interact with Ccs1.

The protein localises to the plastid membrane. Its function is as follows. Required during biogenesis of c-type cytochromes (cytochrome c6 and cytochrome f) at the step of heme attachment. The polypeptide is Cytochrome c biogenesis protein CcsA (Cuscuta exaltata (Tall dodder)).